The following is a 975-amino-acid chain: Glycine dehydrogenase (decarboxylating) (975 aa).

Lys-723 carries the N6-(pyridoxal phosphate)lysine modification.

This sequence belongs to the GcvP family. The glycine cleavage system is composed of four proteins: P, T, L and H. The cofactor is pyridoxal 5'-phosphate.

The catalysed reaction is N(6)-[(R)-lipoyl]-L-lysyl-[glycine-cleavage complex H protein] + glycine + H(+) = N(6)-[(R)-S(8)-aminomethyldihydrolipoyl]-L-lysyl-[glycine-cleavage complex H protein] + CO2. In terms of biological role, the glycine cleavage system catalyzes the degradation of glycine. The P protein binds the alpha-amino group of glycine through its pyridoxal phosphate cofactor; CO(2) is released and the remaining methylamine moiety is then transferred to the lipoamide cofactor of the H protein. The polypeptide is Glycine dehydrogenase (decarboxylating) (Burkholderia orbicola (strain MC0-3)).